Here is a 71-residue protein sequence, read N- to C-terminus: Exodeoxyribonuclease 7 small subunit (71 aa).

Belongs to the XseB family. In terms of assembly, heterooligomer composed of large and small subunits.

The protein localises to the cytoplasm. The catalysed reaction is Exonucleolytic cleavage in either 5'- to 3'- or 3'- to 5'-direction to yield nucleoside 5'-phosphates.. In terms of biological role, bidirectionally degrades single-stranded DNA into large acid-insoluble oligonucleotides, which are then degraded further into small acid-soluble oligonucleotides. This chain is Exodeoxyribonuclease 7 small subunit, found in Streptococcus thermophilus (strain ATCC BAA-250 / LMG 18311).